The primary structure comprises 308 residues: Methionyl-tRNA formyltransferase (308 aa).

(6S)-5,6,7,8-tetrahydrofolate is bound at residue 107-110; the sequence is SLLP.

Belongs to the Fmt family.

It catalyses the reaction L-methionyl-tRNA(fMet) + (6R)-10-formyltetrahydrofolate = N-formyl-L-methionyl-tRNA(fMet) + (6S)-5,6,7,8-tetrahydrofolate + H(+). Attaches a formyl group to the free amino group of methionyl-tRNA(fMet). The formyl group appears to play a dual role in the initiator identity of N-formylmethionyl-tRNA by promoting its recognition by IF2 and preventing the misappropriation of this tRNA by the elongation apparatus. The sequence is that of Methionyl-tRNA formyltransferase from Carboxydothermus hydrogenoformans (strain ATCC BAA-161 / DSM 6008 / Z-2901).